We begin with the raw amino-acid sequence, 91 residues long: PqqA binding protein (91 aa).

Belongs to the PqqD family. As to quaternary structure, monomer. Interacts with PqqE.

The protein operates within cofactor biosynthesis; pyrroloquinoline quinone biosynthesis. In terms of biological role, functions as a PqqA binding protein and presents PqqA to PqqE, in the pyrroloquinoline quinone (PQQ) biosynthetic pathway. This Pseudomonas fluorescens (strain ATCC BAA-477 / NRRL B-23932 / Pf-5) protein is PqqA binding protein.